The sequence spans 146 residues: Large ribosomal subunit protein uL15 (146 aa).

Residues 1–13 (MKLHELHSAEGSR) are compositionally biased toward basic and acidic residues. The tract at residues 1 to 55 (MKLHELHSAEGSRRNRKRVGRGTSSGYGKTSGRGQKGQLARQGGHTRLGFEGGQM) is disordered. The segment covering 23–35 (TSSGYGKTSGRGQ) has biased composition (gly residues).

The protein belongs to the universal ribosomal protein uL15 family. Part of the 50S ribosomal subunit.

In terms of biological role, binds to the 23S rRNA. This is Large ribosomal subunit protein uL15 from Lactobacillus helveticus (strain DPC 4571).